Here is a 387-residue protein sequence, read N- to C-terminus: 3-ketoacyl-CoA thiolase (387 aa).

Cys-91 acts as the Acyl-thioester intermediate in catalysis. Active-site proton acceptor residues include His-343 and Cys-373.

The protein belongs to the thiolase-like superfamily. Thiolase family. As to quaternary structure, heterotetramer of two alpha chains (FadB) and two beta chains (FadA).

The protein resides in the cytoplasm. It catalyses the reaction an acyl-CoA + acetyl-CoA = a 3-oxoacyl-CoA + CoA. Its pathway is lipid metabolism; fatty acid beta-oxidation. Catalyzes the final step of fatty acid oxidation in which acetyl-CoA is released and the CoA ester of a fatty acid two carbons shorter is formed. The sequence is that of 3-ketoacyl-CoA thiolase from Escherichia coli O6:K15:H31 (strain 536 / UPEC).